We begin with the raw amino-acid sequence, 644 residues long: MFQDNPLLAQLKQQLHSQTPRAEGVVKATEKGFGFLEVDAQKSYFIPPPQMKKVMHGDRIIAVIHSEKERESAEPEELVEPFLTRFVGKVQGKNDRLAIVPDHPLLKDAIPCRAARGLNHEFKEGDWAVAEMRRHPLKGDRSFYAELTQYITFGDDHFVPWWVTLARHNLEKEAPDGVATEMLDEGLVRKDLTALDFVTIDSASTEDMDDALFAKALPDDKLQLIVAIADPTAWIAEGSKLDKAAKIRAFTNYLPGFNIPMLPRELSDDLCSLRANEVRPVLACRMTLSADGTIEDNIEFFAATIESKAKLVYDQVSDWLENTGDWQPESEAIAEQVRLLAQICQRRGEWRHNHALVFKDRPDYRFILGEKGEVLDIVAEPRRIANRIVEEAMIAANICAARVLRDKLGFGIYNVHMGFDPANADALAALLKTHGLHVDAEEVLTLDGFCKLRRELDAQPTGFLDSRIRRFQSFAEISTEPGPHFGLGLEAYATWTSPIRKYGDMINHRLLKAVIKGETATRPQDEITVQMAERRRLNRMAERDVGDWLYARFLKDKAGTDTRFAAEIVDISRGGMRVRLVDNGAIAFIPAPFLHAVRDELVCSQENGTVQIKGETVYKVTDVIDVTIAEVRMETRSIIARPVA.

Residues 189 to 516 (RKDLTALDFV…NHRLLKAVIK (328 aa)) enclose the RNB domain. An S1 motif domain is found at 561–643 (DTRFAAEIVD…ETRSIIARPV (83 aa)).

This sequence belongs to the RNR ribonuclease family. RNase II subfamily.

The protein resides in the cytoplasm. It carries out the reaction Exonucleolytic cleavage in the 3'- to 5'-direction to yield nucleoside 5'-phosphates.. In terms of biological role, involved in mRNA degradation. Hydrolyzes single-stranded polyribonucleotides processively in the 3' to 5' direction. The sequence is that of Exoribonuclease 2 from Escherichia coli O157:H7.